The primary structure comprises 125 residues: Transposase for transposon Tn554 (125 aa).

Functionally, one of three proteins encoded by transposon Tn554 required for its transposition. This is Transposase for transposon Tn554 (tnpC1) from Staphylococcus aureus (strain Mu50 / ATCC 700699).